Consider the following 444-residue polypeptide: Tol-Pal system protein TolB (444 aa).

The N-terminal stretch at 1–31 (MSFDLNRRQLMISAATAAGALALGPARDAFG) is a signal peptide.

The protein belongs to the TolB family. In terms of assembly, the Tol-Pal system is composed of five core proteins: the inner membrane proteins TolA, TolQ and TolR, the periplasmic protein TolB and the outer membrane protein Pal. They form a network linking the inner and outer membranes and the peptidoglycan layer.

It localises to the periplasm. Its function is as follows. Part of the Tol-Pal system, which plays a role in outer membrane invagination during cell division and is important for maintaining outer membrane integrity. The sequence is that of Tol-Pal system protein TolB from Rhodopseudomonas palustris (strain ATCC BAA-98 / CGA009).